A 1414-amino-acid polypeptide reads, in one-letter code: DNA-directed RNA polymerase subunit beta' (1414 aa).

The Zn(2+) site is built by Cys-70, Cys-72, Cys-85, and Cys-88. The Mg(2+) site is built by Asp-460, Asp-462, and Asp-464. Positions 814, 888, 895, and 898 each coordinate Zn(2+). The tract at residues 1378 to 1414 (EREAARQLANPFEDAPVTVGGEPEAPAADTPSDDSAE) is disordered.

Belongs to the RNA polymerase beta' chain family. The RNAP catalytic core consists of 2 alpha, 1 beta, 1 beta' and 1 omega subunit. When a sigma factor is associated with the core the holoenzyme is formed, which can initiate transcription. Mg(2+) serves as cofactor. It depends on Zn(2+) as a cofactor.

It catalyses the reaction RNA(n) + a ribonucleoside 5'-triphosphate = RNA(n+1) + diphosphate. Functionally, DNA-dependent RNA polymerase catalyzes the transcription of DNA into RNA using the four ribonucleoside triphosphates as substrates. This chain is DNA-directed RNA polymerase subunit beta', found in Bordetella bronchiseptica (strain ATCC BAA-588 / NCTC 13252 / RB50) (Alcaligenes bronchisepticus).